The primary structure comprises 56 residues: Large ribosomal subunit protein bL32 (56 aa).

The span at 1–16 (MAVQKNKKSRSKRGMR) shows a compositional bias: basic residues. The disordered stretch occupies residues 1–36 (MAVQKNKKSRSKRGMRRSHDSLSTPQLSVDSTSGEL). Residues 21-34 (SLSTPQLSVDSTSG) are compositionally biased toward polar residues.

It belongs to the bacterial ribosomal protein bL32 family.

This chain is Large ribosomal subunit protein bL32, found in Shewanella sediminis (strain HAW-EB3).